The following is a 401-amino-acid chain: Nicotinate phosphoribosyltransferase (401 aa).

His221 carries the post-translational modification Phosphohistidine; by autocatalysis.

Belongs to the NAPRTase family. Post-translationally, transiently phosphorylated on a His residue during the reaction cycle. Phosphorylation strongly increases the affinity for substrates and increases the rate of nicotinate D-ribonucleotide production. Dephosphorylation regenerates the low-affinity form of the enzyme, leading to product release.

The enzyme catalyses nicotinate + 5-phospho-alpha-D-ribose 1-diphosphate + ATP + H2O = nicotinate beta-D-ribonucleotide + ADP + phosphate + diphosphate. The protein operates within cofactor biosynthesis; NAD(+) biosynthesis; nicotinate D-ribonucleotide from nicotinate: step 1/1. In terms of biological role, catalyzes the synthesis of beta-nicotinate D-ribonucleotide from nicotinate and 5-phospho-D-ribose 1-phosphate at the expense of ATP. The chain is Nicotinate phosphoribosyltransferase from Pectobacterium atrosepticum (strain SCRI 1043 / ATCC BAA-672) (Erwinia carotovora subsp. atroseptica).